We begin with the raw amino-acid sequence, 237 residues long: MYRILLVEDDERIASLLGGHLQKYGYEVKIAEQLNDIKLEFAEMKPDLVLLDINLPFFDGFYWCRQIRTISNAPIIFISARTDELNQVMAIENGGDDYITKPFHLEVVMAKIKSVLRRTYGEYSPSLPQESRIVELGGLTIYPDQNEAEWNSVRILFSQKEFQLLSIFVREHKKIVSRDELLEALWDDVDFVDDNTLTVNVNRLRRKLENAGLTDCISTIRGQGYQFQVNRKDEAEC.

Residues 3 to 116 form the Response regulatory domain; sequence RILLVEDDER…VVMAKIKSVL (114 aa). Residue Asp52 is modified to 4-aspartylphosphate. A DNA-binding region (ompR/PhoB-type) is located at residues 131 to 229; it reads SRIVELGGLT…IRGQGYQFQV (99 aa).

Post-translationally, phosphorylated by YvcQ.

Its subcellular location is the cytoplasm. In terms of biological role, member of the two-component regulatory system YvcQ/YvcP. This is an uncharacterized protein from Bacillus subtilis (strain 168).